Reading from the N-terminus, the 284-residue chain is MDAIKKKMLAMKMEKENAIDRAEQMEQKLRDVEETKNKLEEEFNNLQNKFSNLQNDFDTANEGLTEAQTKLEASEKHVAELESDTAGLNRRIQLLEEDLERSEERLQSATEKLEEASKAADESERGRKVLESRSLADDERLDGLEAQLKEAKYIAEDAERKYDEAARKLAITEVDLERAEARLEAAEAKVWELDEELHIVGNNIKTLSIQNDQASQREDSYQETIRDLTQRLKDAENRATEAERTVSKLQKEVDRLEDELLAEKERYKSISDELDSTFAELAGY.

Positions 1–284 form a coiled coil; it reads MDAIKKKMLA…DSTFAELAGY (284 aa). The segment at 103-131 is disordered; it reads EERLQSATEKLEEASKAADESERGRKVLE.

The protein belongs to the tropomyosin family. In terms of assembly, homodimer.

Tropomyosin, in association with the troponin complex, plays a central role in the calcium dependent regulation of muscle contraction. In Biomphalaria glabrata (Bloodfluke planorb), this protein is Tropomyosin-1.